Consider the following 196-residue polypeptide: SAGA-associated factor 11 homolog (196 aa).

Positions 1-22 are disordered; it reads MSAANMPTTTGAQGSGNQVPTT. The SGF11-type zinc-finger motif lies at 106 to 127; that stretch reads CTCPNCDRLVAAARFAPHLEKC. A disordered region spans residues 144 to 196; it reads TKEGASSAHLHSAGNAGGTDDEDDVDWSSDKRRKKSNQNSRNNGSKKNNGKTF. S172 is modified (phosphoserine). The segment covering 180–196 has biased composition (low complexity); that stretch reads NQNSRNNGSKKNNGKTF.

The protein belongs to the SGF11 family. As to quaternary structure, component of some SAGA transcription coactivator-HAT complexes, at least composed of Ada2b, not/nonstop, Pcaf/Gcn5, Sgf11 and Spt3. Within the SAGA complex, Sgf11, e(y)2, and not/nonstop form an additional subcomplex of SAGA called the DUB module (deubiquitination module). Interacts directly with not/nonstop. Interacts with the AMEX complex component xmas-2. Interacts with Cbp80; important for promoter recruitment of Sgf11 that is not associated with the DUB module.

The protein resides in the nucleus. It is found in the nucleoplasm. The protein localises to the cytoplasm. In terms of biological role, component of the transcription regulatory histone acetylation (HAT) complex SAGA, a multiprotein complex that activates transcription by remodeling chromatin and mediating histone acetylation and deubiquitination. Within the SAGA complex, participates in a subcomplex that specifically deubiquitinates histone H2B. The SAGA complex is recruited to specific gene promoters by activators, where it is required for transcription. Required for nuclear receptor-mediated transactivation. Binds independently on SAGA to promoters in an RNA-dependent manner. Binds to mRNA and is essential for total mRNA export from the nucleus. Required to counteract heterochromatin silencing. Controls the development of neuronal connectivity in visual system by being required for accurate axon targeting in the optic lobe. Required for expression of ecdysone-induced genes such as br/broad. The protein is SAGA-associated factor 11 homolog of Drosophila yakuba (Fruit fly).